A 436-amino-acid polypeptide reads, in one-letter code: G2/mitotic-specific cyclin-B (436 aa).

The span at 1 to 17 shows a compositional bias: polar residues; the sequence is MSTINNPLNIKTRSHSS. Residues 1-33 are disordered; that stretch reads MSTINNPLNIKTRSHSSMGGGMIMDENKVPKSS.

The protein belongs to the cyclin family. Cyclin AB subfamily. As to quaternary structure, interacts with the cdk1 protein kinase to form a serine/threonine kinase holoenzyme complex also known as maturation promoting factor (MPF). The cyclin subunit imparts substrate specificity to the complex.

In terms of biological role, essential for the control of the cell cycle at the G2/M (mitosis) transition. In Dictyostelium discoideum (Social amoeba), this protein is G2/mitotic-specific cyclin-B (cycB).